Here is a 461-residue protein sequence, read N- to C-terminus: Photosystem II CP43 reaction center protein (461 aa).

Positions 1–2 (ME) are excised as a propeptide. At T3 the chain carries N-acetylthreonine. Position 3 is a phosphothreonine (T3). Helical transmembrane passes span 57 to 81 (LFEV…PHLA), 122 to 143 (LIGP…KDKN), 166 to 188 (KAMY…RVIT), 243 to 263 (KPWA…LSYS), and 279 to 300 (WFNN…ASQS). E355 contacts [CaMn4O5] cluster. Residues 435-459 (RARAAAAGFEKGIDRDNEPVLSMKP) form a helical membrane-spanning segment.

This sequence belongs to the PsbB/PsbC family. PsbC subfamily. As to quaternary structure, PSII is composed of 1 copy each of membrane proteins PsbA, PsbB, PsbC, PsbD, PsbE, PsbF, PsbH, PsbI, PsbJ, PsbK, PsbL, PsbM, PsbT, PsbX, PsbY, PsbZ, Psb30/Ycf12, at least 3 peripheral proteins of the oxygen-evolving complex and a large number of cofactors. It forms dimeric complexes. Binds multiple chlorophylls and provides some of the ligands for the Ca-4Mn-5O cluster of the oxygen-evolving complex. It may also provide a ligand for a Cl- that is required for oxygen evolution. PSII binds additional chlorophylls, carotenoids and specific lipids. serves as cofactor.

Its subcellular location is the plastid. It is found in the chloroplast thylakoid membrane. One of the components of the core complex of photosystem II (PSII). It binds chlorophyll and helps catalyze the primary light-induced photochemical processes of PSII. PSII is a light-driven water:plastoquinone oxidoreductase, using light energy to abstract electrons from H(2)O, generating O(2) and a proton gradient subsequently used for ATP formation. This Tupiella akineta (Green alga) protein is Photosystem II CP43 reaction center protein.